We begin with the raw amino-acid sequence, 171 residues long: Shikimate kinase (171 aa).

14–19 (GAGKST) is an ATP binding site. Residue Ser-18 coordinates Mg(2+). Residues Asp-36, Arg-60, and Gly-82 each contribute to the substrate site. Residue Arg-120 participates in ATP binding. Residue Arg-139 participates in substrate binding. Residue Gln-156 participates in ATP binding.

It belongs to the shikimate kinase family. In terms of assembly, monomer. Requires Mg(2+) as cofactor.

The protein resides in the cytoplasm. It carries out the reaction shikimate + ATP = 3-phosphoshikimate + ADP + H(+). It participates in metabolic intermediate biosynthesis; chorismate biosynthesis; chorismate from D-erythrose 4-phosphate and phosphoenolpyruvate: step 5/7. Its function is as follows. Catalyzes the specific phosphorylation of the 3-hydroxyl group of shikimic acid using ATP as a cosubstrate. This chain is Shikimate kinase, found in Shewanella amazonensis (strain ATCC BAA-1098 / SB2B).